A 418-amino-acid chain; its full sequence is 3-isopropylmalate dehydratase large subunit (418 aa).

3 residues coordinate [4Fe-4S] cluster: Cys298, Cys358, and Cys361.

Belongs to the aconitase/IPM isomerase family. LeuC type 2 subfamily. In terms of assembly, heterodimer of LeuC and LeuD. The cofactor is [4Fe-4S] cluster.

The catalysed reaction is (2R,3S)-3-isopropylmalate = (2S)-2-isopropylmalate. It functions in the pathway amino-acid biosynthesis; L-leucine biosynthesis; L-leucine from 3-methyl-2-oxobutanoate: step 2/4. Catalyzes the isomerization between 2-isopropylmalate and 3-isopropylmalate, via the formation of 2-isopropylmaleate. The sequence is that of 3-isopropylmalate dehydratase large subunit from Thermoanaerobacter sp. (strain X514).